A 150-amino-acid polypeptide reads, in one-letter code: Macrodomain Ter protein (150 aa).

Belongs to the MatP family. As to quaternary structure, homodimer.

Its subcellular location is the cytoplasm. Required for spatial organization of the terminus region of the chromosome (Ter macrodomain) during the cell cycle. Prevents early segregation of duplicated Ter macrodomains during cell division. Binds specifically to matS, which is a 13 bp signature motif repeated within the Ter macrodomain. The polypeptide is Macrodomain Ter protein (Klebsiella pneumoniae (strain 342)).